We begin with the raw amino-acid sequence, 128 residues long: Glycine cleavage system H protein (128 aa).

Positions 22 to 104 (TVLVGITDYA…YGEGWIFRLK (83 aa)) constitute a Lipoyl-binding domain. N6-lipoyllysine is present on Lys-63.

The protein belongs to the GcvH family. As to quaternary structure, the glycine cleavage system is composed of four proteins: P, T, L and H. The cofactor is (R)-lipoate.

Its function is as follows. The glycine cleavage system catalyzes the degradation of glycine. The H protein shuttles the methylamine group of glycine from the P protein to the T protein. In Thermus thermophilus (strain ATCC BAA-163 / DSM 7039 / HB27), this protein is Glycine cleavage system H protein.